The sequence spans 202 residues: Tetranectin (202 aa).

The first 21 residues, 1 to 21 (MGFWGTYLLFCLFSFLSQLTA), serve as a signal peptide directing secretion. 3 disulfides stabilise this stretch: C71–C81, C98–C197, and C173–C189. One can recognise a C-type lectin domain in the interval 77–198 (VNLKCLLAFT…CRDQLPYICQ (122 aa)).

Homotrimer. In terms of tissue distribution, highest expression in lung, skeletal muscle and heart. Expressed in retina.

It localises to the secreted. Tetranectin binds to plasminogen and to isolated kringle 4. May be involved in the packaging of molecules destined for exocytosis. Plays a role in retinal function. The polypeptide is Tetranectin (Clec3b) (Mus musculus (Mouse)).